The chain runs to 453 residues: uncharacterized protein (453 aa).

The [4Fe-4S] cluster site is built by C74, C80, C83, and C162. 4 residues coordinate S-adenosyl-L-methionine: Q286, Y315, E336, and D384. C411 functions as the Nucleophile in the catalytic mechanism.

This sequence belongs to the class I-like SAM-binding methyltransferase superfamily. RNA M5U methyltransferase family.

This is an uncharacterized protein from Staphylococcus aureus (strain MW2).